A 60-amino-acid chain; its full sequence is MKNTILLLFTAFIFLSGFFGMSAEALADPKADPLAGPFPDADPDPINMKASAAVAKKLLG.

An N-terminal signal peptide occupies residues 1–23; that stretch reads MKNTILLLFTAFIFLSGFFGMSA. Positions 24–45 are excised as a propeptide; the sequence is EALADPKADPLAGPFPDADPDP. AXPX repeat units lie at residues 27–30, 31–34, 35–38, and 40–43; these read ADPK, ADPL, AGPF, and DADP. Leu-59 bears the Leucine amide mark.

Expressed by the venom gland.

The protein resides in the secreted. The protein localises to the target cell membrane. In terms of biological role, antimicrobial peptide. Shows activity against both Gram-positive (S.aureus MIC=1.9-3.75 ug/ml) and -negative (E.coli MIC=15-60 ug/ml) bacteria, as well against fungi (C.albicans MIC=15 ug/ml). Also promotes moderate mast cell degranulation. Does not show hemolytic activity on rabbit and human erythrocytes. Its mast cell degranulation activity may be related to the activation of G-protein coupled receptors in mast cells as well as interaction with other proteins located in cell endosomal membranes in the mast cells. The polypeptide is Mastoparan-VB1 (Vespa bicolor (Black shield wasp)).